The following is a 409-amino-acid chain: LL-diaminopimelate aminotransferase (409 aa).

Substrate-binding residues include Tyr15 and Gly42. Pyridoxal 5'-phosphate-binding positions include Tyr72, 108 to 109 (AK), Tyr132, Asn186, Tyr217, and 245 to 247 (SFS). Residues Lys109, Tyr132, and Asn186 each contribute to the substrate site. At Lys248 the chain carries N6-(pyridoxal phosphate)lysine. Pyridoxal 5'-phosphate-binding residues include Arg256 and Asn291. The substrate site is built by Asn291 and Arg387.

The protein belongs to the class-I pyridoxal-phosphate-dependent aminotransferase family. LL-diaminopimelate aminotransferase subfamily. As to quaternary structure, homodimer. The cofactor is pyridoxal 5'-phosphate.

The catalysed reaction is (2S,6S)-2,6-diaminopimelate + 2-oxoglutarate = (S)-2,3,4,5-tetrahydrodipicolinate + L-glutamate + H2O + H(+). It participates in amino-acid biosynthesis; L-lysine biosynthesis via DAP pathway; LL-2,6-diaminopimelate from (S)-tetrahydrodipicolinate (aminotransferase route): step 1/1. Its function is as follows. Involved in the synthesis of meso-diaminopimelate (m-DAP or DL-DAP), required for both lysine and peptidoglycan biosynthesis. Catalyzes the direct conversion of tetrahydrodipicolinate to LL-diaminopimelate. This is LL-diaminopimelate aminotransferase from Phocaeicola vulgatus (strain ATCC 8482 / DSM 1447 / JCM 5826 / CCUG 4940 / NBRC 14291 / NCTC 11154) (Bacteroides vulgatus).